The sequence spans 333 residues: Small ribosomal subunit protein uS2 (333 aa).

Belongs to the universal ribosomal protein uS2 family.

The polypeptide is Small ribosomal subunit protein uS2 (Azorhizobium caulinodans (strain ATCC 43989 / DSM 5975 / JCM 20966 / LMG 6465 / NBRC 14845 / NCIMB 13405 / ORS 571)).